We begin with the raw amino-acid sequence, 321 residues long: NADH-ubiquinone oxidoreductase chain 1 (321 aa).

8 helical membrane passes run 5–25 (LVTL…AFLT), 74–94 (LLIL…APIP), 104–124 (LGLL…LWAG), 151–171 (GIIL…LLTI), 175–195 (YTWL…STLA), 227–247 (FFLA…ILFI), 256–276 (ELFL…FLWI), and 296–316 (FLPM…SISG).

It belongs to the complex I subunit 1 family.

Its subcellular location is the mitochondrion inner membrane. It carries out the reaction a ubiquinone + NADH + 5 H(+)(in) = a ubiquinol + NAD(+) + 4 H(+)(out). Its function is as follows. Core subunit of the mitochondrial membrane respiratory chain NADH dehydrogenase (Complex I) that is believed to belong to the minimal assembly required for catalysis. Complex I functions in the transfer of electrons from NADH to the respiratory chain. The immediate electron acceptor for the enzyme is believed to be ubiquinone. This Varanus baritji (Black-spotted ridge-tailed monitor) protein is NADH-ubiquinone oxidoreductase chain 1 (MT-ND1).